The chain runs to 227 residues: 2-C-methyl-D-erythritol 4-phosphate cytidylyltransferase (227 aa).

The protein belongs to the IspD/TarI cytidylyltransferase family. IspD subfamily.

It catalyses the reaction 2-C-methyl-D-erythritol 4-phosphate + CTP + H(+) = 4-CDP-2-C-methyl-D-erythritol + diphosphate. It functions in the pathway isoprenoid biosynthesis; isopentenyl diphosphate biosynthesis via DXP pathway; isopentenyl diphosphate from 1-deoxy-D-xylulose 5-phosphate: step 2/6. Functionally, catalyzes the formation of 4-diphosphocytidyl-2-C-methyl-D-erythritol from CTP and 2-C-methyl-D-erythritol 4-phosphate (MEP). The polypeptide is 2-C-methyl-D-erythritol 4-phosphate cytidylyltransferase (Mycobacterium marinum (strain ATCC BAA-535 / M)).